The following is a 478-amino-acid chain: 3-isopropylmalate dehydratase large subunit (478 aa).

3 residues coordinate [4Fe-4S] cluster: C359, C417, and C420.

It belongs to the aconitase/IPM isomerase family. LeuC type 1 subfamily. Heterodimer of LeuC and LeuD. It depends on [4Fe-4S] cluster as a cofactor.

The catalysed reaction is (2R,3S)-3-isopropylmalate = (2S)-2-isopropylmalate. Its pathway is amino-acid biosynthesis; L-leucine biosynthesis; L-leucine from 3-methyl-2-oxobutanoate: step 2/4. In terms of biological role, catalyzes the isomerization between 2-isopropylmalate and 3-isopropylmalate, via the formation of 2-isopropylmaleate. The sequence is that of 3-isopropylmalate dehydratase large subunit from Anaeromyxobacter sp. (strain Fw109-5).